The following is a 600-amino-acid chain: Threonine dehydratase, mitochondrial (600 aa).

Lysine 144 is modified (N6-(pyridoxal phosphate)lysine). 2 ACT-like domains span residues valine 425 to aspartate 497 and arginine 519 to asparagine 590.

It belongs to the serine/threonine dehydratase family. Homotetramer. Pyridoxal 5'-phosphate is required as a cofactor.

Its subcellular location is the mitochondrion. The protein localises to the cytoplasm. It carries out the reaction L-threonine = 2-oxobutanoate + NH4(+). It functions in the pathway amino-acid biosynthesis; L-isoleucine biosynthesis; 2-oxobutanoate from L-threonine: step 1/1. With respect to regulation, isoleucine allosterically inhibits while valine allosterically activates this enzyme. In Schizosaccharomyces pombe (strain 972 / ATCC 24843) (Fission yeast), this protein is Threonine dehydratase, mitochondrial.